Reading from the N-terminus, the 263-residue chain is Type III pantothenate kinase (263 aa).

Position 9–16 (9–16 (DIGNTSIK)) interacts with ATP. Substrate-binding positions include tyrosine 103 and 110-113 (GADR). Aspartate 112 acts as the Proton acceptor in catalysis. A K(+)-binding site is contributed by aspartate 134. ATP is bound at residue threonine 137. A substrate-binding site is contributed by threonine 190.

Belongs to the type III pantothenate kinase family. In terms of assembly, homodimer. NH4(+) serves as cofactor. It depends on K(+) as a cofactor.

The protein resides in the cytoplasm. The catalysed reaction is (R)-pantothenate + ATP = (R)-4'-phosphopantothenate + ADP + H(+). Its pathway is cofactor biosynthesis; coenzyme A biosynthesis; CoA from (R)-pantothenate: step 1/5. Catalyzes the phosphorylation of pantothenate (Pan), the first step in CoA biosynthesis. The sequence is that of Type III pantothenate kinase from Desulfovibrio desulfuricans (strain ATCC 27774 / DSM 6949 / MB).